Reading from the N-terminus, the 653-residue chain is DNA ligase (653 aa).

Residues 32–36 (NFEYD) and 80–81 (SL) contribute to the NAD(+) site. Lys104 functions as the N6-AMP-lysine intermediate in the catalytic mechanism. NAD(+)-binding residues include Arg125, Glu159, and Lys297. The Zn(2+) site is built by Cys386, Cys389, Cys406, and Cys411. A BRCT domain is found at 571-653 (GGSEKLKGLT…EEFIQLLNEA (83 aa)).

This sequence belongs to the NAD-dependent DNA ligase family. LigA subfamily. Requires Mg(2+) as cofactor. Mn(2+) is required as a cofactor.

The enzyme catalyses NAD(+) + (deoxyribonucleotide)n-3'-hydroxyl + 5'-phospho-(deoxyribonucleotide)m = (deoxyribonucleotide)n+m + AMP + beta-nicotinamide D-nucleotide.. Functionally, DNA ligase that catalyzes the formation of phosphodiester linkages between 5'-phosphoryl and 3'-hydroxyl groups in double-stranded DNA using NAD as a coenzyme and as the energy source for the reaction. It is essential for DNA replication and repair of damaged DNA. This chain is DNA ligase, found in Lachnoclostridium phytofermentans (strain ATCC 700394 / DSM 18823 / ISDg) (Clostridium phytofermentans).